A 382-amino-acid chain; its full sequence is Methylthioribose-1-phosphate isomerase (382 aa).

Asp-261 (proton donor) is an active-site residue.

This sequence belongs to the eIF-2B alpha/beta/delta subunits family. MtnA subfamily.

It is found in the cytoplasm. Its subcellular location is the nucleus. It catalyses the reaction 5-(methylsulfanyl)-alpha-D-ribose 1-phosphate = 5-(methylsulfanyl)-D-ribulose 1-phosphate. It functions in the pathway amino-acid biosynthesis; L-methionine biosynthesis via salvage pathway; L-methionine from S-methyl-5-thio-alpha-D-ribose 1-phosphate: step 1/6. Catalyzes the interconversion of methylthioribose-1-phosphate (MTR-1-P) into methylthioribulose-1-phosphate (MTRu-1-P). This chain is Methylthioribose-1-phosphate isomerase, found in Ricinus communis (Castor bean).